Consider the following 267-residue polypeptide: 3-methyl-2-oxobutanoate hydroxymethyltransferase (267 aa).

Residues D46 and D85 each coordinate Mg(2+). Residues 46-47, D85, and K115 contribute to the 3-methyl-2-oxobutanoate site; that span reads DS. E117 is a binding site for Mg(2+). Residue E184 is the Proton acceptor of the active site.

Belongs to the PanB family. As to quaternary structure, homodecamer; pentamer of dimers. Mg(2+) is required as a cofactor.

It is found in the cytoplasm. The catalysed reaction is 3-methyl-2-oxobutanoate + (6R)-5,10-methylene-5,6,7,8-tetrahydrofolate + H2O = 2-dehydropantoate + (6S)-5,6,7,8-tetrahydrofolate. The protein operates within cofactor biosynthesis; (R)-pantothenate biosynthesis; (R)-pantoate from 3-methyl-2-oxobutanoate: step 1/2. Its function is as follows. Catalyzes the reversible reaction in which hydroxymethyl group from 5,10-methylenetetrahydrofolate is transferred onto alpha-ketoisovalerate to form ketopantoate. This Geobacter metallireducens (strain ATCC 53774 / DSM 7210 / GS-15) protein is 3-methyl-2-oxobutanoate hydroxymethyltransferase.